We begin with the raw amino-acid sequence, 178 residues long: Large ribosomal subunit protein uL6 (178 aa).

This sequence belongs to the universal ribosomal protein uL6 family. Part of the 50S ribosomal subunit.

This protein binds to the 23S rRNA, and is important in its secondary structure. It is located near the subunit interface in the base of the L7/L12 stalk, and near the tRNA binding site of the peptidyltransferase center. This Nautilia profundicola (strain ATCC BAA-1463 / DSM 18972 / AmH) protein is Large ribosomal subunit protein uL6.